A 725-amino-acid polypeptide reads, in one-letter code: Catalase-peroxidase (725 aa).

Polar residues-rich tracts occupy residues 1-12 (MSTSNDPSNNAS) and 23-32 (PKQSAGSGTA). Residues 1–20 (MSTSNDPSNNASAGKCPFHA) form the signal peptide. The segment at 1-35 (MSTSNDPSNNASAGKCPFHAETPKQSAGSGTANRD) is disordered. The tryptophyl-tyrosyl-methioninium (Trp-Tyr) (with M-252) cross-link spans 105–226 (WHGAGTYRTV…IGATEMGLIY (122 aa)). Histidine 106 functions as the Proton acceptor in the catalytic mechanism. Positions 226 to 252 (YVNPEGPNASGEPLSAAAAIRATFGNM) form a cross-link, tryptophyl-tyrosyl-methioninium (Tyr-Met) (with W-105). Histidine 267 provides a ligand contact to heme b.

It belongs to the peroxidase family. Peroxidase/catalase subfamily. In terms of assembly, homodimer or homotetramer. Heme b is required as a cofactor. In terms of processing, formation of the three residue Trp-Tyr-Met cross-link is important for the catalase, but not the peroxidase activity of the enzyme.

It catalyses the reaction H2O2 + AH2 = A + 2 H2O. The enzyme catalyses 2 H2O2 = O2 + 2 H2O. Functionally, bifunctional enzyme with both catalase and broad-spectrum peroxidase activity. This Klebsiella pneumoniae subsp. pneumoniae (strain ATCC 700721 / MGH 78578) protein is Catalase-peroxidase.